We begin with the raw amino-acid sequence, 189 residues long: Putative dihydrofolate reductase (189 aa).

The region spanning 3–185 (KMNLIVAMDA…LKFEFCKWKV (183 aa)) is the DHFR domain. Residues Ala9 and 15-21 (GIGKNGV) contribute to the NADP(+) site. Residue 29 to 34 (DMQYFA) coordinates substrate. 53 to 55 (RKC) provides a ligand contact to NADP(+). Arg69 contacts substrate. NADP(+) is bound by residues 75-77 (SRQ) and 115-122 (GGAEIYDL).

The protein belongs to the dihydrofolate reductase family.

The catalysed reaction is (6S)-5,6,7,8-tetrahydrofolate + NADP(+) = 7,8-dihydrofolate + NADPH + H(+). It participates in cofactor biosynthesis; tetrahydrofolate biosynthesis; 5,6,7,8-tetrahydrofolate from 7,8-dihydrofolate: step 1/1. In terms of biological role, key enzyme in folate metabolism. Catalyzes an essential reaction for de novo glycine and purine synthesis, and for DNA precursor synthesis. This chain is Putative dihydrofolate reductase (dhfr-1), found in Caenorhabditis elegans.